A 351-amino-acid polypeptide reads, in one-letter code: Protein-glutamate methylesterase/protein-glutamine glutaminase (351 aa).

The region spanning 6–123 is the Response regulatory domain; the sequence is RVLVVDDSPT…ARPFGDLADK (118 aa). The residue at position 57 (aspartate 57) is a 4-aspartylphosphate. One can recognise a CheB-type methylesterase domain in the interval 154–346; that stretch reads YRAGRKVVAI…EEILKLTTAR (193 aa). Active-site residues include serine 166, histidine 192, and aspartate 288.

The protein belongs to the CheB family. In terms of processing, phosphorylated by CheA. Phosphorylation of the N-terminal regulatory domain activates the methylesterase activity.

It is found in the cytoplasm. The enzyme catalyses [protein]-L-glutamate 5-O-methyl ester + H2O = L-glutamyl-[protein] + methanol + H(+). It catalyses the reaction L-glutaminyl-[protein] + H2O = L-glutamyl-[protein] + NH4(+). Its function is as follows. Involved in chemotaxis. Part of a chemotaxis signal transduction system that modulates chemotaxis in response to various stimuli. Catalyzes the demethylation of specific methylglutamate residues introduced into the chemoreceptors (methyl-accepting chemotaxis proteins or MCP) by CheR. Also mediates the irreversible deamidation of specific glutamine residues to glutamic acid. This is Protein-glutamate methylesterase/protein-glutamine glutaminase from Agrobacterium fabrum (strain C58 / ATCC 33970) (Agrobacterium tumefaciens (strain C58)).